A 131-amino-acid chain; its full sequence is Translation initiation factor 5A (131 aa).

Lys-37 is modified (hypusine).

This sequence belongs to the eIF-5A family.

It localises to the cytoplasm. Functionally, functions by promoting the formation of the first peptide bond. This is Translation initiation factor 5A (eIF5A) from Methanococcus maripaludis (strain C7 / ATCC BAA-1331).